Consider the following 208-residue polypeptide: Uracil phosphoribosyltransferase (208 aa).

5-phospho-alpha-D-ribose 1-diphosphate contacts are provided by residues Arg-78, Arg-103, and 130-138 (DPMLATGGS). Uracil is bound by residues Ile-193 and 198–200 (GDA). Residue Asp-199 coordinates 5-phospho-alpha-D-ribose 1-diphosphate.

It belongs to the UPRTase family. Mg(2+) serves as cofactor.

The catalysed reaction is UMP + diphosphate = 5-phospho-alpha-D-ribose 1-diphosphate + uracil. It participates in pyrimidine metabolism; UMP biosynthesis via salvage pathway; UMP from uracil: step 1/1. Its activity is regulated as follows. Allosterically activated by GTP. Functionally, catalyzes the conversion of uracil and 5-phospho-alpha-D-ribose 1-diphosphate (PRPP) to UMP and diphosphate. This is Uracil phosphoribosyltransferase from Escherichia fergusonii (strain ATCC 35469 / DSM 13698 / CCUG 18766 / IAM 14443 / JCM 21226 / LMG 7866 / NBRC 102419 / NCTC 12128 / CDC 0568-73).